We begin with the raw amino-acid sequence, 424 residues long: Serine--tRNA ligase (424 aa).

229 to 231 is a binding site for L-serine; that stretch reads TAE. ATP is bound at residue 260–262; it reads RRE. Residue Glu283 participates in L-serine binding. 347–350 is an ATP binding site; sequence EVSS. Ser383 serves as a coordination point for L-serine.

The protein belongs to the class-II aminoacyl-tRNA synthetase family. Type-1 seryl-tRNA synthetase subfamily. As to quaternary structure, homodimer. The tRNA molecule binds across the dimer.

Its subcellular location is the cytoplasm. It carries out the reaction tRNA(Ser) + L-serine + ATP = L-seryl-tRNA(Ser) + AMP + diphosphate + H(+). The catalysed reaction is tRNA(Sec) + L-serine + ATP = L-seryl-tRNA(Sec) + AMP + diphosphate + H(+). Its pathway is aminoacyl-tRNA biosynthesis; selenocysteinyl-tRNA(Sec) biosynthesis; L-seryl-tRNA(Sec) from L-serine and tRNA(Sec): step 1/1. Catalyzes the attachment of serine to tRNA(Ser). Is also able to aminoacylate tRNA(Sec) with serine, to form the misacylated tRNA L-seryl-tRNA(Sec), which will be further converted into selenocysteinyl-tRNA(Sec). The polypeptide is Serine--tRNA ligase (Roseiflexus castenholzii (strain DSM 13941 / HLO8)).